Here is a 235-residue protein sequence, read N- to C-terminus: Large ribosomal subunit protein uL1 (235 aa).

Belongs to the universal ribosomal protein uL1 family. As to quaternary structure, part of the 50S ribosomal subunit.

Functionally, binds directly to 23S rRNA. The L1 stalk is quite mobile in the ribosome, and is involved in E site tRNA release. Protein L1 is also a translational repressor protein, it controls the translation of the L11 operon by binding to its mRNA. In Prochlorococcus marinus (strain MIT 9515), this protein is Large ribosomal subunit protein uL1.